Reading from the N-terminus, the 256-residue chain is Triosephosphate isomerase (256 aa).

9–11 (NWK) serves as a coordination point for substrate. The active-site Electrophile is the His95. Glu167 serves as the catalytic Proton acceptor. Substrate-binding positions include Gly173, Ser212, and 233–234 (GG).

This sequence belongs to the triosephosphate isomerase family. In terms of assembly, homodimer.

It localises to the cytoplasm. The enzyme catalyses D-glyceraldehyde 3-phosphate = dihydroxyacetone phosphate. It participates in carbohydrate biosynthesis; gluconeogenesis. It functions in the pathway carbohydrate degradation; glycolysis; D-glyceraldehyde 3-phosphate from glycerone phosphate: step 1/1. Functionally, involved in the gluconeogenesis. Catalyzes stereospecifically the conversion of dihydroxyacetone phosphate (DHAP) to D-glyceraldehyde-3-phosphate (G3P). This is Triosephosphate isomerase from Proteus mirabilis (strain HI4320).